An 81-amino-acid polypeptide reads, in one-letter code: Adipogenin (81 aa).

Residues 16 to 36 (FLVFWLCLPVALLLFLLIIWL) form a helical membrane-spanning segment.

Belongs to the adipogenin family. As to expression, highly expressed in subcutaneous, perirenal and mesecentric adipose tissue.

The protein resides in the membrane. The protein localises to the nucleus. Plays a role in stimulating adipocyte differentiation and development. The sequence is that of Adipogenin from Bos taurus (Bovine).